A 258-amino-acid polypeptide reads, in one-letter code: Imidazole glycerol phosphate synthase subunit HisF (258 aa).

Active-site residues include D11 and D130.

The protein belongs to the HisA/HisF family. In terms of assembly, heterodimer of HisH and HisF.

It is found in the cytoplasm. It carries out the reaction 5-[(5-phospho-1-deoxy-D-ribulos-1-ylimino)methylamino]-1-(5-phospho-beta-D-ribosyl)imidazole-4-carboxamide + L-glutamine = D-erythro-1-(imidazol-4-yl)glycerol 3-phosphate + 5-amino-1-(5-phospho-beta-D-ribosyl)imidazole-4-carboxamide + L-glutamate + H(+). It functions in the pathway amino-acid biosynthesis; L-histidine biosynthesis; L-histidine from 5-phospho-alpha-D-ribose 1-diphosphate: step 5/9. Its function is as follows. IGPS catalyzes the conversion of PRFAR and glutamine to IGP, AICAR and glutamate. The HisF subunit catalyzes the cyclization activity that produces IGP and AICAR from PRFAR using the ammonia provided by the HisH subunit. This Escherichia coli (strain ATCC 8739 / DSM 1576 / NBRC 3972 / NCIMB 8545 / WDCM 00012 / Crooks) protein is Imidazole glycerol phosphate synthase subunit HisF.